The primary structure comprises 417 residues: Testis-specific Y-encoded-like protein 5 (417 aa).

Residues 1–25 (MSGRSRGRKSSRAKNRGKGRAKARV) show a composition bias toward basic residues. Disordered regions lie at residues 1 to 55 (MSGR…QVQA), 93 to 112 (AAGD…AASL), 127 to 202 (GTVG…EGSM), and 391 to 417 (KGKE…SQSN). Basic and acidic residues predominate over residues 27–37 (PAPDDAPRDPD). Residues 93 to 103 (AAGDHGQAAAR) show a composition bias toward low complexity. Residues 182 to 191 (GEEKKEERDA) are compositionally biased toward basic and acidic residues. The segment covering 406–417 (METTQPGVSQSN) has biased composition (polar residues).

It belongs to the nucleosome assembly protein (NAP) family. As to quaternary structure, interacts with USP7.

In terms of biological role, involved in modulation of cell growth and cellular response to gamma radiation probably via regulation of the Akt signaling pathway. Involved in regulation of p53/TP53. Suppresses p53/TP53 protein levels and promotes its ubiquitination; the function is dependent on USP7 and independent on MDM2. Proposed to displace p53/TP53 from interaction with USP7. This is Testis-specific Y-encoded-like protein 5 (TSPYL5) from Homo sapiens (Human).